Reading from the N-terminus, the 322-residue chain is NADH-quinone oxidoreductase subunit H (322 aa).

Transmembrane regions (helical) follow at residues 15–35 (ILHI…LSIL), 82–102 (IFIL…PTIP), 114–134 (IGIL…LFAG), 149–169 (ASAQ…GVIA), 186–206 (VWNV…GIAL), 243–263 (ISII…YFGF), 265–285 (GSSF…FILI), and 302–322 (WKIC…FILI).

This sequence belongs to the complex I subunit 1 family. In terms of assembly, NDH-1 is composed of 13 different subunits. Subunits NuoA, H, J, K, L, M, N constitute the membrane sector of the complex.

Its subcellular location is the cell membrane. The catalysed reaction is a quinone + NADH + 5 H(+)(in) = a quinol + NAD(+) + 4 H(+)(out). In terms of biological role, NDH-1 shuttles electrons from NADH, via FMN and iron-sulfur (Fe-S) centers, to quinones in the respiratory chain. The immediate electron acceptor for the enzyme in this species is believed to be ubiquinone. Couples the redox reaction to proton translocation (for every two electrons transferred, four hydrogen ions are translocated across the cytoplasmic membrane), and thus conserves the redox energy in a proton gradient. This subunit may bind ubiquinone. This chain is NADH-quinone oxidoreductase subunit H, found in Buchnera aphidicola subsp. Schizaphis graminum (strain Sg).